Here is a 375-residue protein sequence, read N- to C-terminus: Putative monooxygenase Rv1533 (375 aa).

Residues Q190, G195, G224, and 243 to 246 (WCGS) contribute to the FMN site.

It belongs to the nitronate monooxygenase family. The cofactor is FMN.

This is Putative monooxygenase Rv1533 from Mycobacterium tuberculosis (strain ATCC 25618 / H37Rv).